Here is a 131-residue protein sequence, read N- to C-terminus: Small ribosomal subunit protein bS6 (131 aa).

Residues 98–131 (EASPMVKAKDERRERRDDFANETADDSDAGDSEE) form a disordered region. The span at 104–116 (KAKDERRERRDDF) shows a compositional bias: basic and acidic residues. Residues 120 to 131 (TADDSDAGDSEE) show a composition bias toward acidic residues.

Belongs to the bacterial ribosomal protein bS6 family.

Functionally, binds together with bS18 to 16S ribosomal RNA. The sequence is that of Small ribosomal subunit protein bS6 from Enterobacter sp. (strain 638).